The sequence spans 331 residues: Ketol-acid reductoisomerase (NADP(+)) (331 aa).

In terms of domain architecture, KARI N-terminal Rossmann spans 1 to 182 (MATLYYDTDA…GGTRAGILET (182 aa)). Residues 25–28 (YGSQ), Ser51, Ser53, and 83–86 (DEFQ) contribute to the NADP(+) site. His108 is an active-site residue. Position 134 (Gly134) interacts with NADP(+). Residues 183-328 (NFKEETETDL…KGLRAMFSWL (146 aa)) form the KARI C-terminal knotted domain. Mg(2+)-binding residues include Asp191, Glu195, Glu227, and Glu231. Residue Ser252 participates in substrate binding.

The protein belongs to the ketol-acid reductoisomerase family. Mg(2+) is required as a cofactor.

The catalysed reaction is (2R)-2,3-dihydroxy-3-methylbutanoate + NADP(+) = (2S)-2-acetolactate + NADPH + H(+). It catalyses the reaction (2R,3R)-2,3-dihydroxy-3-methylpentanoate + NADP(+) = (S)-2-ethyl-2-hydroxy-3-oxobutanoate + NADPH + H(+). The protein operates within amino-acid biosynthesis; L-isoleucine biosynthesis; L-isoleucine from 2-oxobutanoate: step 2/4. It functions in the pathway amino-acid biosynthesis; L-valine biosynthesis; L-valine from pyruvate: step 2/4. Its function is as follows. Involved in the biosynthesis of branched-chain amino acids (BCAA). Catalyzes an alkyl-migration followed by a ketol-acid reduction of (S)-2-acetolactate (S2AL) to yield (R)-2,3-dihydroxy-isovalerate. In the isomerase reaction, S2AL is rearranged via a Mg-dependent methyl migration to produce 3-hydroxy-3-methyl-2-ketobutyrate (HMKB). In the reductase reaction, this 2-ketoacid undergoes a metal-dependent reduction by NADPH to yield (R)-2,3-dihydroxy-isovalerate. The protein is Ketol-acid reductoisomerase (NADP(+)) of Synechococcus sp. (strain RCC307).